We begin with the raw amino-acid sequence, 180 residues long: Pro-glucagon (180 aa).

The first 20 residues, 1-20 (MKSLYFVAGLFVMLVQGSWQ), serve as a signal peptide directing secretion. A compositionally biased stretch (polar residues) spans 25–35 (NTEEKSSSFPA). Residues 25-59 (NTEEKSSSFPAPQTDPLGDPDQINEDKRHSQGTFT) are disordered. Ser-54 carries the post-translational modification Phosphoserine. The propeptide occupies 84–89 (NKNNIA). 2 positions are modified to phosphoserine: Ser-105 and Ser-108. Arg-127 is modified (arginine amide). A propeptide spanning residues 131–145 (DFPEEVNIVEELRRR) is cleaved from the precursor. Residues Ser-150 and Ser-152 each carry the phosphoserine modification.

Belongs to the glucagon family. Post-translationally, proglucagon is post-translationally processed in a tissue-specific manner in pancreatic A cells and intestinal L cells. In pancreatic A cells, the major bioactive hormone is glucagon cleaved by PCSK2/PC2. In the intestinal L cells PCSK1/PC1 liberates GLP-1, GLP-2, glicentin and oxyntomodulin. GLP-1 is further N-terminally truncated by post-translational processing in the intestinal L cells resulting in GLP-1(7-37) GLP-1-(7-36)amide. The C-terminal amidation is neither important for the metabolism of GLP-1 nor for its effects on the endocrine pancreas. As to expression, glucagon is secreted in the A cells of the islets of Langerhans. GLP-1, GLP-2, oxyntomodulin and glicentin are secreted from enteroendocrine cells throughout the gastrointestinal tract.

The protein resides in the secreted. Functionally, plays a key role in glucose metabolism and homeostasis. Regulates blood glucose by increasing gluconeogenesis and decreasing glycolysis. A counterregulatory hormone of insulin, raises plasma glucose levels in response to insulin-induced hypoglycemia. Plays an important role in initiating and maintaining hyperglycemic conditions in diabetes. Potent stimulator of glucose-dependent insulin release. Also stimulates insulin release in response to IL6. Plays important roles on gastric motility and the suppression of plasma glucagon levels. May be involved in the suppression of satiety and stimulation of glucose disposal in peripheral tissues, independent of the actions of insulin. Has growth-promoting activities on intestinal epithelium. May also regulate the hypothalamic pituitary axis (HPA) via effects on LH, TSH, CRH, oxytocin, and vasopressin secretion. Increases islet mass through stimulation of islet neogenesis and pancreatic beta cell proliferation. Inhibits beta cell apoptosis. Its function is as follows. Stimulates intestinal growth and up-regulates villus height in the small intestine, concomitant with increased crypt cell proliferation and decreased enterocyte apoptosis. The gastrointestinal tract, from the stomach to the colon is the principal target for GLP-2 action. Plays a key role in nutrient homeostasis, enhancing nutrient assimilation through enhanced gastrointestinal function, as well as increasing nutrient disposal. Stimulates intestinal glucose transport and decreases mucosal permeability. In terms of biological role, significantly reduces food intake. Inhibits gastric emptying in humans. Suppression of gastric emptying may lead to increased gastric distension, which may contribute to satiety by causing a sensation of fullness. Functionally, may modulate gastric acid secretion and the gastro-pyloro-duodenal activity. May play an important role in intestinal mucosal growth in the early period of life. This chain is Pro-glucagon (GCG), found in Bos taurus (Bovine).